The following is a 245-amino-acid chain: MRVDGREKTELRHIHIHTNYLKHPEGSVLIEVGDTKVICSATIEERVPPFMRGEGKGWVTAEYAMIPRATEQRTIRESSKGKVTGRTMEIQRLIGRALRAVVDLEALGERTVWIDCDVIQADGGTRTASITGAYVAMVLAFEKLLQAEKVSKIPVKDYLAATSVGIVEEQGVVLDLNYAEDSKADVDMNVIMTGKGQFVEVQGTGEEATFSRAQLNELLDAAEQGIFQLIDIQKEALGDIVSHIE.

Residues Arg86 and 124–126 each bind phosphate; that span reads GTR.

This sequence belongs to the RNase PH family. Homohexameric ring arranged as a trimer of dimers.

The catalysed reaction is tRNA(n+1) + phosphate = tRNA(n) + a ribonucleoside 5'-diphosphate. In terms of biological role, phosphorolytic 3'-5' exoribonuclease that plays an important role in tRNA 3'-end maturation. Removes nucleotide residues following the 3'-CCA terminus of tRNAs; can also add nucleotides to the ends of RNA molecules by using nucleoside diphosphates as substrates, but this may not be physiologically important. Probably plays a role in initiation of 16S rRNA degradation (leading to ribosome degradation) during starvation. The chain is Ribonuclease PH from Bacillus anthracis (strain A0248).